A 320-amino-acid polypeptide reads, in one-letter code: Glucokinase (320 aa).

The protein belongs to the ROK (NagC/XylR) family. As to quaternary structure, monomer. A divalent metal cation is required as a cofactor.

It carries out the reaction D-glucose + ATP = D-glucose 6-phosphate + ADP + H(+). In terms of biological role, catalyzes the phosphorylation of D-glucose to D-glucose 6-phosphate using ATP as the phosphate donor. ITP can also serve as an effective phosphoryl donor. According to Hansen et al., the enzyme has a broad hexose specificity, and in addition to glucose, which shows the highest catalytic efficiency, it can also phosphorylate fructose, mannose, glucosamine, N-acetylglucosamine, N-acetylmannosamine and 2-deoxyglucose. However, according to Sakuraba et al., the enzyme shows strict specificity for D-glucose. The polypeptide is Glucokinase (Aeropyrum pernix (strain ATCC 700893 / DSM 11879 / JCM 9820 / NBRC 100138 / K1)).